The following is a 105-amino-acid chain: Resistin-like beta (105 aa).

Positions 1–23 are cleaved as a signal peptide; it reads MKPTLCFLFILVSLFPLIVPGNA. Intrachain disulfides connect Cys-49–Cys-102, Cys-61–Cys-101, Cys-70–Cys-87, Cys-72–Cys-89, and Cys-76–Cys-91.

The protein belongs to the resistin/FIZZ family. In terms of assembly, homodimer; disulfide-linked. Heterodimer with RETNLG. In terms of tissue distribution, strongly expressed in colon, and at lower levels in ileum. In colon, found throughout the crypt and surface epithelium and in goblet cells (at protein level). Specific to the gastrointestinal tract; not detected in other tissues tested.

Its subcellular location is the secreted. Functionally, probable hormone. This is Resistin-like beta (Retnlb) from Mus musculus (Mouse).